Reading from the N-terminus, the 324-residue chain is Pepsin-2B (324 aa).

In terms of domain architecture, Peptidase A1 spans 14-321; sequence YYGVISIGTP…DRTNNKVGFA (308 aa). Asp-32 is a catalytic residue. Cys-45 and Cys-50 form a disulfide bridge. A disordered region spans residues 86–109; sequence QDTVSVGGGSDPNQELGESQTEPG. A compositionally biased stretch (polar residues) spans 96–107; sequence DPNQELGESQTE. A disulfide bridge links Cys-206 with Cys-209. Residue Asp-214 is part of the active site. Cys-247 and Cys-280 are oxidised to a cystine.

The protein belongs to the peptidase A1 family.

In Gadus morhua (Atlantic cod), this protein is Pepsin-2B.